A 212-amino-acid polypeptide reads, in one-letter code: 2,3-bisphosphoglycerate-dependent phosphoglycerate mutase (212 aa).

Residues 9 to 16, 22 to 23, Arg61, 88 to 91, Lys99, 115 to 116, and 159 to 160 contribute to the substrate site; these read RHGQSEWN, TG, ERDY, RR, and GN. His10 serves as the catalytic Tele-phosphohistidine intermediate. Catalysis depends on Glu88, which acts as the Proton donor/acceptor.

Belongs to the phosphoglycerate mutase family. BPG-dependent PGAM subfamily. As to quaternary structure, homodimer.

The enzyme catalyses (2R)-2-phosphoglycerate = (2R)-3-phosphoglycerate. The protein operates within carbohydrate degradation; glycolysis; pyruvate from D-glyceraldehyde 3-phosphate: step 3/5. In terms of biological role, catalyzes the interconversion of 2-phosphoglycerate and 3-phosphoglycerate. The chain is 2,3-bisphosphoglycerate-dependent phosphoglycerate mutase from Methylobacterium radiotolerans (strain ATCC 27329 / DSM 1819 / JCM 2831 / NBRC 15690 / NCIMB 10815 / 0-1).